The primary structure comprises 503 residues: Probable 2-isopropylmalate synthase (503 aa).

The 252-residue stretch at 8–259 (IRVFDTTLRD…KTNIKTEHLF (252 aa)) folds into the Pyruvate carboxyltransferase domain. Residues Asp17, His197, His199, and Asn233 each contribute to the a divalent metal cation site.

The protein belongs to the alpha-IPM synthase/homocitrate synthase family. Homodimer. It depends on a divalent metal cation as a cofactor.

It catalyses the reaction 3-methyl-2-oxobutanoate + acetyl-CoA + H2O = (2S)-2-isopropylmalate + CoA + H(+). Its pathway is amino-acid biosynthesis; L-leucine biosynthesis; L-leucine from 3-methyl-2-oxobutanoate: step 1/4. Its function is as follows. Catalyzes the condensation of the acetyl group of acetyl-CoA with 3-methyl-2-oxobutanoate (2-oxoisovalerate) to form 3-carboxy-3-hydroxy-4-methylpentanoate (2-isopropylmalate). This chain is Probable 2-isopropylmalate synthase (leuA), found in Archaeoglobus fulgidus (strain ATCC 49558 / DSM 4304 / JCM 9628 / NBRC 100126 / VC-16).